Reading from the N-terminus, the 152-residue chain is Transcription factor XE1.1 (152 aa).

2 disordered regions span residues 1–54 (RDDF…ANNA) and 123–152 (KVSAVSAEPPNTHPGVHPGLTDTTNPMGHM). 2 stretches are compositionally biased toward basic and acidic residues: residues 7-22 (DDMKSDDESSQKEMKS) and 38-54 (PEQKVEREKERRMANNA). In terms of domain architecture, bHLH spans 47 to 100 (ERRMANNARERLRVRDINEAFKELGRMCQLHLKSEKPQTKLLILHQAVAVILNL). The segment at 102 to 125 (QQVRERNLNPKAACLKRREEEKVS) is class A specific domain. Over residues 143–152 (TDTTNPMGHM) the composition is skewed to polar residues.

As to quaternary structure, efficient DNA binding requires dimerization with another bHLH protein. Forms homo- or heterooligomers with myogenin, E12 and ITF2 proteins.

The protein resides in the nucleus. Transcriptional regulator. Involved in the initiation of neuronal differentiation. Activates transcription by binding to the E box-containing promoter. The sequence is that of Transcription factor XE1.1 from Xenopus laevis (African clawed frog).